The chain runs to 284 residues: Bifunctional protein FolD (284 aa).

Residues 165–167, Ser190, and Ile231 contribute to the NADP(+) site; that span reads GAS.

It belongs to the tetrahydrofolate dehydrogenase/cyclohydrolase family. As to quaternary structure, homodimer.

It carries out the reaction (6R)-5,10-methylene-5,6,7,8-tetrahydrofolate + NADP(+) = (6R)-5,10-methenyltetrahydrofolate + NADPH. The catalysed reaction is (6R)-5,10-methenyltetrahydrofolate + H2O = (6R)-10-formyltetrahydrofolate + H(+). It functions in the pathway one-carbon metabolism; tetrahydrofolate interconversion. Its function is as follows. Catalyzes the oxidation of 5,10-methylenetetrahydrofolate to 5,10-methenyltetrahydrofolate and then the hydrolysis of 5,10-methenyltetrahydrofolate to 10-formyltetrahydrofolate. The polypeptide is Bifunctional protein FolD (Bordetella avium (strain 197N)).